A 277-amino-acid polypeptide reads, in one-letter code: Bifunctional protein FolD (277 aa).

NADP(+)-binding positions include 164 to 166, Ser189, and Val230; that span reads GRS.

This sequence belongs to the tetrahydrofolate dehydrogenase/cyclohydrolase family. In terms of assembly, homodimer.

It catalyses the reaction (6R)-5,10-methylene-5,6,7,8-tetrahydrofolate + NADP(+) = (6R)-5,10-methenyltetrahydrofolate + NADPH. The catalysed reaction is (6R)-5,10-methenyltetrahydrofolate + H2O = (6R)-10-formyltetrahydrofolate + H(+). It functions in the pathway one-carbon metabolism; tetrahydrofolate interconversion. Its function is as follows. Catalyzes the oxidation of 5,10-methylenetetrahydrofolate to 5,10-methenyltetrahydrofolate and then the hydrolysis of 5,10-methenyltetrahydrofolate to 10-formyltetrahydrofolate. The protein is Bifunctional protein FolD of Exiguobacterium sibiricum (strain DSM 17290 / CCUG 55495 / CIP 109462 / JCM 13490 / 255-15).